A 222-amino-acid chain; its full sequence is MEHDGSLGRMLRFCEWIMRFAYTNLLWLFFTLLGLGVFGIMPATAALFAVMRKWIQGQDNVPVLKTFWQEYKGEFFRSNLLGAVLALIGVIIYIDLALIYPSHFLLHILRFAIMIFGFLFVSMLFYVFPLLVHFDWKKRLYVKFSLLLSVAYLQYTLTMLALTVALFFLLAYLPGIVPFFSVSLISYCHMRIVYAVLLKVEQHGGEPQRKSHIRKAFYPETR.

4 helical membrane passes run Leu-25–Ala-45, Leu-80–Tyr-100, Phe-111–Leu-131, and Leu-160–Phe-180.

The protein localises to the cell membrane. This is an uncharacterized protein from Bacillus subtilis (strain 168).